The sequence spans 155 residues: Ribosomal RNA large subunit methyltransferase H (155 aa).

Residues L73, G104, and 123 to 128 (LSALTL) contribute to the S-adenosyl-L-methionine site.

The protein belongs to the RNA methyltransferase RlmH family. As to quaternary structure, homodimer.

It is found in the cytoplasm. It carries out the reaction pseudouridine(1915) in 23S rRNA + S-adenosyl-L-methionine = N(3)-methylpseudouridine(1915) in 23S rRNA + S-adenosyl-L-homocysteine + H(+). In terms of biological role, specifically methylates the pseudouridine at position 1915 (m3Psi1915) in 23S rRNA. This chain is Ribosomal RNA large subunit methyltransferase H, found in Saccharophagus degradans (strain 2-40 / ATCC 43961 / DSM 17024).